The primary structure comprises 238 residues: tRNA (guanine-N(7)-)-methyltransferase (238 aa).

Glu68, Glu93, Asp120, and Asp143 together coordinate S-adenosyl-L-methionine. Asp143 is an active-site residue. Substrate-binding positions include Lys147, Asp179, and 216–219 (TKFE).

The protein belongs to the class I-like SAM-binding methyltransferase superfamily. TrmB family.

It carries out the reaction guanosine(46) in tRNA + S-adenosyl-L-methionine = N(7)-methylguanosine(46) in tRNA + S-adenosyl-L-homocysteine. Its pathway is tRNA modification; N(7)-methylguanine-tRNA biosynthesis. In terms of biological role, catalyzes the formation of N(7)-methylguanine at position 46 (m7G46) in tRNA. This is tRNA (guanine-N(7)-)-methyltransferase from Shewanella putrefaciens (strain CN-32 / ATCC BAA-453).